The following is a 71-amino-acid chain: Immune-induced peptide 18 (71 aa).

The N-terminal stretch at 1–24 (MKLIALCCLLLLGLLGFLAAPGVA) is a signal peptide. A propeptide spanning residues 25–26 (SP) is cleaved from the precursor. Residues 26–71 (PSRHTGPGNGSGSGAGSGNPFRSPSSQQRPLYYDAPIGKPSKTMYA) form a disordered region. The span at 32–42 (PGNGSGSGAGS) shows a compositional bias: gly residues.

Hemolymph (at protein level).

Its subcellular location is the secreted. This Drosophila melanogaster (Fruit fly) protein is Immune-induced peptide 18 (IM18).